The following is a 187-amino-acid chain: dTTP/UTP pyrophosphatase (187 aa).

The Proton acceptor role is filled by Asp-68.

Belongs to the Maf family. YhdE subfamily. It depends on a divalent metal cation as a cofactor.

The protein localises to the cytoplasm. It catalyses the reaction dTTP + H2O = dTMP + diphosphate + H(+). The enzyme catalyses UTP + H2O = UMP + diphosphate + H(+). Nucleoside triphosphate pyrophosphatase that hydrolyzes dTTP and UTP. May have a dual role in cell division arrest and in preventing the incorporation of modified nucleotides into cellular nucleic acids. The polypeptide is dTTP/UTP pyrophosphatase (Thermus thermophilus (strain ATCC BAA-163 / DSM 7039 / HB27)).